A 256-amino-acid polypeptide reads, in one-letter code: Zinc metalloprotease (256 aa).

The Proton donor role is filled by His74.

This sequence belongs to the peptidase M4 family. It depends on Zn(2+) as a cofactor.

It is found in the secreted. Functionally, may play a role in ulcer formation. Proteolytic digestion of gastric mucus has been suggested as an important mechanism by which its pathogenicity is at least partly exerted. The polypeptide is Zinc metalloprotease (hap) (Helicobacter pylori (Campylobacter pylori)).